Reading from the N-terminus, the 424-residue chain is Glutamyl-tRNA reductase (424 aa).

Residues 49–52 (TCNR), S109, 114–116 (EDQ), and Q120 each bind substrate. Residue C50 is the Nucleophile of the active site. Position 189–194 (189–194 (GFGKMS)) interacts with NADP(+).

Belongs to the glutamyl-tRNA reductase family. Homodimer.

The catalysed reaction is (S)-4-amino-5-oxopentanoate + tRNA(Glu) + NADP(+) = L-glutamyl-tRNA(Glu) + NADPH + H(+). Its pathway is porphyrin-containing compound metabolism; protoporphyrin-IX biosynthesis; 5-aminolevulinate from L-glutamyl-tRNA(Glu): step 1/2. In terms of biological role, catalyzes the NADPH-dependent reduction of glutamyl-tRNA(Glu) to glutamate 1-semialdehyde (GSA). The protein is Glutamyl-tRNA reductase of Alkaliphilus metalliredigens (strain QYMF).